The primary structure comprises 396 residues: Na(+)/H(+) antiporter NhaA (396 aa).

11 consecutive transmembrane segments (helical) span residues 14–34 (ASGI…NSGL), 59–79 (LLLW…GLEV), 95–115 (TFPA…YTFF), 124–144 (AGWA…MALL), 154–174 (VFLL…IALF), 178–198 (QLSL…LWMN), 205–225 (IGLY…SGVH), 254–274 (ALHP…NAGV), 278–298 (GIGL…GLFV), 328–348 (IFAV…IASL), and 363–383 (LGIL…LRMS).

This sequence belongs to the NhaA Na(+)/H(+) (TC 2.A.33) antiporter family.

The protein localises to the cell inner membrane. It carries out the reaction Na(+)(in) + 2 H(+)(out) = Na(+)(out) + 2 H(+)(in). In terms of biological role, na(+)/H(+) antiporter that extrudes sodium in exchange for external protons. This is Na(+)/H(+) antiporter NhaA from Aeromonas salmonicida (strain A449).